A 619-amino-acid polypeptide reads, in one-letter code: Frizzled and smoothened-like protein L (619 aa).

Residues 1–24 form the signal peptide; it reads MITNKSKYYFFLILIFINFYLINC. Residues Asn4, Asn63, Asn112, Asn143, Asn159, Asn184, and Asn203 are each glycosylated (N-linked (GlcNAc...) asparagine). Topologically, residues 25–245 are extracellular; it reads QEEYPIDQTG…KQWDRLYDLS (221 aa). The FZ domain occupies 31 to 169; that stretch reads DQTGKCEPYI…YSIYDLSLVN (139 aa). Disulfide bonds link Cys36–Cys106 and Cys48–Cys99. The helical transmembrane segment at 246-266 threads the bilayer; that stretch reads NSLSVLSCVGTLFLLFTFNIL. Over 267-278 the chain is Cytoplasmic; that stretch reads NKKINRFDRMNS. The chain crosses the membrane as a helical span at residues 279-299; the sequence is LFNGSVFMMSLSGVIILFAGG. Residues 300-321 are Extracellular-facing; it reads PRALIKDGGARISVWQDPLCSA. Residues 322-342 form a helical membrane-spanning segment; sequence TGFIFQLFSIAAILFWVVMSF. Over 343 to 358 the chain is Cytoplasmic; it reads ELWYKIKFMTKKLDLK. A helical membrane pass occupies residues 359-379; that stretch reads KYYIPFIIIVSLVFSIIPLAT. Residues 380 to 402 lie on the Extracellular side of the membrane; it reads KNYRMIRGNMHCWVHTTKLQNSL. The chain crosses the membrane as a helical span at residues 403–423; that stretch reads FWIPLGIAITIGTIFIGLVMF. The Cytoplasmic segment spans residues 424–444; the sequence is EIHRIVSANSKGGVLKLEIKS. A helical membrane pass occupies residues 445-465; the sequence is ILNVALIYLTFIYLFAFNFYM. Topologically, residues 466–497 are extracellular; sequence NGQEGVVYGQIESFYQCTLENDASECTIQGPS. A helical transmembrane segment spans residues 498–518; that stretch reads IGSLGFFIFCIRIYGVYCFIL. Topologically, residues 519–619 are cytoplasmic; it reads QGLNYRAYNI…TLKDIEVSKS (101 aa). The tract at residues 581 to 605 is disordered; it reads LNIDSAFSKNNESDDEDDYDPYKKS.

This sequence belongs to the G-protein coupled receptor Fz/Smo family.

It localises to the membrane. This is Frizzled and smoothened-like protein L (fslL) from Dictyostelium discoideum (Social amoeba).